Here is a 325-residue protein sequence, read N- to C-terminus: ATP phosphoribosyltransferase (325 aa).

Belongs to the ATP phosphoribosyltransferase family. Long subfamily. Mg(2+) serves as cofactor.

The protein localises to the cytoplasm. It carries out the reaction 1-(5-phospho-beta-D-ribosyl)-ATP + diphosphate = 5-phospho-alpha-D-ribose 1-diphosphate + ATP. Its pathway is amino-acid biosynthesis; L-histidine biosynthesis; L-histidine from 5-phospho-alpha-D-ribose 1-diphosphate: step 1/9. Feedback inhibited by histidine. Its function is as follows. Catalyzes the condensation of ATP and 5-phosphoribose 1-diphosphate to form N'-(5'-phosphoribosyl)-ATP (PR-ATP). Has a crucial role in the pathway because the rate of histidine biosynthesis seems to be controlled primarily by regulation of HisG enzymatic activity. The polypeptide is ATP phosphoribosyltransferase (Nitrobacter winogradskyi (strain ATCC 25391 / DSM 10237 / CIP 104748 / NCIMB 11846 / Nb-255)).